A 519-amino-acid polypeptide reads, in one-letter code: Cyclic AMP-responsive element-binding protein 3-like protein 1 (519 aa).

Residues 1–60 (MDAVLEPFPADRLFPGSSFLDLGDLNESDFLNNAHFPEHLDHFVENMEDFSNDLFSSFFD) form a required for transcription activation region. The Cytoplasmic segment spans residues 1-376 (MDAVLEPFPA…MAATQTGTCL (376 aa)). Lys184 is covalently cross-linked (Glycyl lysine isopeptide (Lys-Gly) (interchain with G-Cter in SUMO2)). Positions 200–259 (DLVQMPPTPPSSHGSDSDGSQSPRSLPPSSPVRPMARSSTAISTSPLLTAPHKLQGTSGP) are disordered. Over residues 210-223 (SSHGSDSDGSQSPR) the composition is skewed to low complexity. Residues 236 to 246 (RSSTAISTSPL) are compositionally biased toward polar residues. One can recognise a bZIP domain in the interval 290 to 353 (ALKRVRRKIK…RTLLQQLQKL (64 aa)). The basic motif stretch occupies residues 292-321 (KRVRRKIKNKISAQESRRKKKEYVECLEKK). The interval 332 to 353 (LWKKVETLETANRTLLQQLQKL) is leucine-zipper. Residues 377-397 (MVAALCFVLVLGSLVPCLPAF) form a helical; Signal-anchor for type II membrane protein membrane-spanning segment. The S2P recognition motif lies at 392–395 (PCLP). Residues 398-519 (SSGSMTVKED…LGPNTTIKLS (122 aa)) lie on the Lumenal side of the membrane. An S1P recognition motif is present at residues 423–426 (RSLL). The segment at 449-519 (EGWELKPGGP…LGPNTTIKLS (71 aa)) is disordered. The segment covering 462-486 (RPQDHLRHDRADSIHETTKYLRETW) has biased composition (basic and acidic residues). N-linked (GlcNAc...) asparagine glycosylation is found at Asn493, Asn498, and Asn513.

This sequence belongs to the bZIP family. ATF subfamily. In terms of assembly, interacts with SMAD4, the interaction takes place upon TGFB1 induction and SMAD4 acts as a CREB3L1 coactivator to induce the expression of genes involved in assembly of collagen extracellular matrix. Post-translationally, N-glycosylated. In terms of processing, ubiquitinated by HRD1/SYVN1; undergoes 'Lys-48'-linked ubiquitination, followed by rapid proteasomal degradation under normal conditions. Upon ER stress, SYVN1 E3 ubiquitin-protein ligase dissociates from its substrate, ubiquitination does not occur and CREB3L1 is stabilized. Upon ER stress or DNA damage, translocated to the Golgi apparatus, where it is processed by regulated intramembrane proteolysis (RIP) to release the cytosol-facing N-terminal transcription factor domain. The cleavage is performed sequentially by site-1 and site-2 proteases (S1P/MBTPS1 and S2P/MBTPS2). RIP is induced by TGFB1 and ceramide. Expressed in cortical and trabecular bones. Highly expressed in osteoblasts, but not detected in osteoclasts, nor in macrophages. Expressed at relatively low levels in lung and kidney. Weakly expressed in brain and spleen. Expressed in astrocytes.

It is found in the endoplasmic reticulum membrane. The protein resides in the nucleus. In terms of biological role, precursor of the transcription factor form (Processed cyclic AMP-responsive element-binding protein 3-like protein 1), which is embedded in the endoplasmic reticulum membrane with N-terminal DNA-binding and transcription activation domains oriented toward the cytosolic face of the membrane. In response to ER stress or DNA damage, transported to the Golgi, where it is cleaved in a site-specific manner by resident proteases S1P/MBTPS1 and S2P/MBTPS2. The released N-terminal cytosolic domain is translocated to the nucleus where it activates transcription of specific target genes involved in the cell-cycle progression inhibition. Its function is as follows. Transcription factor involved in cell type specific DNA damage and unfolded protein response (UPR). Binds the DNA consensus sequence 5'-GTGXGCXGC-3'. Plays a critical role in bone formation through the transcription of COL1A1, and possibly COL1A2, and the secretion of bone matrix proteins. Directly binds to the UPR element (UPRE)-like sequence in an osteoblast-specific COL1A1 promoter region and induces its transcription. Does not regulate COL1A1 in other tissues, such as skin. Required to protect astrocytes from ER stress-induced cell death. In astrocytes, binds to the cAMP response element (CRE) of the BiP/HSPA5 promoter and participate in its transcriptional activation. In astrocytes and osteoblasts, upon DNA damage, inhibits cell-cycle progression after G2/M phase by binding to promoters and activating transcription of genes encoding cell-cycle inhibitors, such as p21/CDKN1A. Required for TGFB1 to activate genes involved in the assembly of collagen extracellular matrix. In Mus musculus (Mouse), this protein is Cyclic AMP-responsive element-binding protein 3-like protein 1 (Creb3l1).